We begin with the raw amino-acid sequence, 544 residues long: CTP synthase (544 aa).

The interval 1–267 is amidoligase domain; the sequence is MSKFIFVTGG…GDLLVSRLHL (267 aa). S13 is a binding site for CTP. Position 13 (S13) interacts with UTP. 14-19 contributes to the ATP binding site; it reads SVGKGI. Y54 provides a ligand contact to L-glutamine. D71 contributes to the ATP binding site. Mg(2+) contacts are provided by D71 and E141. CTP-binding positions include 148-150, 188-193, and K224; these read DIE and KTKPTQ. Residues 188 to 193 and K224 contribute to the UTP site; that span reads KTKPTQ. A Glutamine amidotransferase type-1 domain is found at 299-534; it reads YVELKDAYYS…INAAKKVIRD (236 aa). G354 provides a ligand contact to L-glutamine. The active-site Nucleophile; for glutamine hydrolysis is the C381. L-glutamine contacts are provided by residues 382-385, E405, and R462; that span reads LGMQ. Active-site residues include H507 and E509.

It belongs to the CTP synthase family. Homotetramer.

The enzyme catalyses UTP + L-glutamine + ATP + H2O = CTP + L-glutamate + ADP + phosphate + 2 H(+). It catalyses the reaction L-glutamine + H2O = L-glutamate + NH4(+). The catalysed reaction is UTP + NH4(+) + ATP = CTP + ADP + phosphate + 2 H(+). It participates in pyrimidine metabolism; CTP biosynthesis via de novo pathway; CTP from UDP: step 2/2. Its activity is regulated as follows. Allosterically activated by GTP, when glutamine is the substrate; GTP has no effect on the reaction when ammonia is the substrate. The allosteric effector GTP functions by stabilizing the protein conformation that binds the tetrahedral intermediate(s) formed during glutamine hydrolysis. Inhibited by the product CTP, via allosteric rather than competitive inhibition. Functionally, catalyzes the ATP-dependent amination of UTP to CTP with either L-glutamine or ammonia as the source of nitrogen. Regulates intracellular CTP levels through interactions with the four ribonucleotide triphosphates. In Dehalococcoides mccartyi (strain ATCC BAA-2100 / JCM 16839 / KCTC 5957 / BAV1), this protein is CTP synthase.